Reading from the N-terminus, the 254-residue chain is MASLLKVDPEVKLKVDSFRERITSEAEDLVANFFPKKLLELDGFLKEPILNIHDLTQIHSDMNLPVPDPILLTNSHDGLDGPNMKKRKLEDREETFQGTKVFVMPNGMLKSNQQLVDIIEKVKPEIRLLIEKCNTVKMWVQLLIPRIEDGNNFGVSIQEETVAELRTVESEAASYLDQISRYYITRAKLVSKIAKYPHVEDYRRTVTEIDEKEYISLRLIISELRNQYVTLHDMILKNIEKIKRPRSSNAETLY.

2 positions are modified to N6-acetyllysine: K6 and K14. Position 195 is an N6-acetyllysine; by P300/CBP (K195).

Homoheptamer. In terms of processing, acetylation at the major site Lys-195 is important for oligomerization and ability to degrade its target substrates. Deacetylated by SIRT1.

In terms of biological role, implicated in immunoproteasome assembly and required for efficient antigen processing. The PA28 activator complex enhances the generation of class I binding peptides by altering the cleavage pattern of the proteasome. The chain is Proteasome activator complex subunit 3 from Gallus gallus (Chicken).